The following is a 1786-amino-acid chain: Transcription initiation factor TFIID subunit 1b (1786 aa).

Disordered stretches follow at residues 54–83 (EDYDEQGGQEKEHVPVEKSFDSEEREPVVL) and 350–372 (FGSRGSQSTNESTNKSRHHPQLL). A compositionally biased stretch (basic and acidic residues) spans 61-83 (GQEKEHVPVEKSFDSEEREPVVL). A compositionally biased stretch (polar residues) spans 352–362 (SRGSQSTNEST). The Ubiquitin-like domain maps to 574-650 (MTIVVKSLGG…VHLLRTKVHL (77 aa)). Positions 1303–1313 (MKTNKHCPKYR) are enriched in basic residues. 3 disordered regions span residues 1303-1382 (MKTN…DVAA), 1397-1471 (LKIS…KDQA), and 1596-1634 (SEREEEKRRKAKQKKKLQRGILENYPPRRNDGISSESGQ). Residues 1357 to 1377 (TKISVNEATKVGDSTSKTPGS) are compositionally biased toward polar residues. A compositionally biased stretch (basic residues) spans 1397 to 1407 (LKISSKAKPKA). Residues 1433-1464 (HNPSVSGQLLPSTETDQAASSRYTTSVPQPSL) are compositionally biased toward polar residues. Coiled-coil stretches lie at residues 1591–1620 (REVIRSEREEEKRRKAKQKKKLQRGILENY) and 1752–1786 (LADELLVKCDRLLDEYRDELKEAEKGIVDSSDSLR). A compositionally biased stretch (basic residues) spans 1604 to 1613 (RKAKQKKKLQ). The 119-residue stretch at 1656 to 1774 (KRRKKGQVGL…DEYRDELKEA (119 aa)) folds into the Bromo domain.

This sequence belongs to the TAF1 family. Component of the TFIID complex. TFIID is composed of TATA binding protein (TBP) and a number of TBP-associated factors (TAFs) whose MWs range from 14-217 kDa. In terms of tissue distribution, expressed in roots, shoots, leaves and inflorescences.

The protein localises to the nucleus. TAFs are components of the transcription factor IID (TFIID) complex that is essential for mediating regulation of RNA polymerase transcription. Core scaffold of the TFIID complex. Acts as a histone acetyltransferase involved in the light regulation of growth and gene expression. Required for H3K9, H3K27, and H4K12 acetylation on the target promoters. The chain is Transcription initiation factor TFIID subunit 1b (TAF1B) from Arabidopsis thaliana (Mouse-ear cress).